The following is a 208-amino-acid chain: ATP phosphoribosyltransferase (208 aa).

It belongs to the ATP phosphoribosyltransferase family. Short subfamily. In terms of assembly, heteromultimer composed of HisG and HisZ subunits.

It is found in the cytoplasm. The catalysed reaction is 1-(5-phospho-beta-D-ribosyl)-ATP + diphosphate = 5-phospho-alpha-D-ribose 1-diphosphate + ATP. Its pathway is amino-acid biosynthesis; L-histidine biosynthesis; L-histidine from 5-phospho-alpha-D-ribose 1-diphosphate: step 1/9. In terms of biological role, catalyzes the condensation of ATP and 5-phosphoribose 1-diphosphate to form N'-(5'-phosphoribosyl)-ATP (PR-ATP). Has a crucial role in the pathway because the rate of histidine biosynthesis seems to be controlled primarily by regulation of HisG enzymatic activity. This chain is ATP phosphoribosyltransferase, found in Thermotoga neapolitana (strain ATCC 49049 / DSM 4359 / NBRC 107923 / NS-E).